We begin with the raw amino-acid sequence, 332 residues long: MLMTRPNLKGRSFLAEKDFTQEELLYFLDLAAELKEKKKNGIPHHYLEGKNVALLFEKTSTRTRCAFTVACTDLGANPEYLGKSDIQLGKKESVEDTAKVLGRMFDGIEFRGFNHETVESLAQNSGVPVWNGLTDMWHPTQTLADLLTIREHVGKLKNVKLVYVGDGRNNVANSLLVGGAIVGMDVRICTPETLWPAQEVIDLAKKYNEQVMITSNVEEAVANADVIYTDVWVSMGEEEKFAERVKLLKPYQVNMKMIKETGNENVIFLHCLPAFHDVETMYGEEVYEKYGLKEMEVTDEVFRSKHSKVFDQAENRMHTIKAVMAATLGNME.

Residues 60–63 (STRT), Gln87, Arg111, and 138–141 (HPTQ) each bind carbamoyl phosphate. Residues Asn170, Asp230, and 234 to 235 (SM) contribute to the L-ornithine site. Carbamoyl phosphate-binding positions include 271–272 (CL) and Arg316.

It belongs to the aspartate/ornithine carbamoyltransferase superfamily. OTCase family.

Its subcellular location is the cytoplasm. The catalysed reaction is carbamoyl phosphate + L-ornithine = L-citrulline + phosphate + H(+). Its pathway is amino-acid degradation; L-arginine degradation via ADI pathway; carbamoyl phosphate from L-arginine: step 2/2. Its function is as follows. Reversibly catalyzes the transfer of the carbamoyl group from carbamoyl phosphate (CP) to the N(epsilon) atom of ornithine (ORN) to produce L-citrulline. This Bacillus cereus (strain ATCC 10987 / NRS 248) protein is Ornithine carbamoyltransferase, catabolic.